An 89-amino-acid chain; its full sequence is Myrmicitoxin(1)-Pr2a (89 aa).

Residues 1-23 (MEIPKLLYIAVIAIGLSGSLTCA) form the signal peptide. Residues 24–61 (TPLANPWADPEAEANPEAKAIAEATAEAIAEALAEPEP) constitute a propeptide that is removed on maturation. Residue Asn88 is modified to Asparagine amide.

This sequence belongs to the formicidae venom clade 1 family. In terms of tissue distribution, expressed by the venom gland.

It is found in the secreted. Its function is as follows. Vertebrate-selective toxin that causes pain by targeting voltage-gated sodium channels. The polypeptide is Myrmicitoxin(1)-Pr2a (Pogonomyrmex rugosus (Desert harvester ant)).